The sequence spans 559 residues: Small ribosomal subunit protein uS3m (559 aa).

Positions 113–134 are disordered; the sequence is EGTEEERNEVRGRGAGKRVESI. Residues 120–134 show a composition bias toward basic and acidic residues; that stretch reads NEVRGRGAGKRVESI.

It belongs to the universal ribosomal protein uS3 family.

Its subcellular location is the mitochondrion. The protein is Small ribosomal subunit protein uS3m (RPS3) of Zea mays (Maize).